Here is a 90-residue protein sequence, read N- to C-terminus: Probable Fe(2+)-trafficking protein (90 aa).

The protein belongs to the Fe(2+)-trafficking protein family.

Its function is as follows. Could be a mediator in iron transactions between iron acquisition and iron-requiring processes, such as synthesis and/or repair of Fe-S clusters in biosynthetic enzymes. This chain is Probable Fe(2+)-trafficking protein, found in Bordetella bronchiseptica (strain ATCC BAA-588 / NCTC 13252 / RB50) (Alcaligenes bronchisepticus).